A 123-amino-acid polypeptide reads, in one-letter code: Small ribosomal subunit protein uS12 (123 aa).

Positions 1-21 are disordered; the sequence is MPTIEQLVRKGRQAKPKKSKT. Positions 9 to 20 are enriched in basic residues; sequence RKGRQAKPKKSK.

This sequence belongs to the universal ribosomal protein uS12 family. As to quaternary structure, part of the 30S ribosomal subunit. Contacts proteins S8 and S17. May interact with IF1 in the 30S initiation complex.

In terms of biological role, with S4 and S5 plays an important role in translational accuracy. Its function is as follows. Interacts with and stabilizes bases of the 16S rRNA that are involved in tRNA selection in the A site and with the mRNA backbone. Located at the interface of the 30S and 50S subunits, it traverses the body of the 30S subunit contacting proteins on the other side and probably holding the rRNA structure together. The combined cluster of proteins S8, S12 and S17 appears to hold together the shoulder and platform of the 30S subunit. This chain is Small ribosomal subunit protein uS12, found in Bifidobacterium longum (strain NCC 2705).